The sequence spans 288 residues: ATP synthase gamma chain (288 aa).

It belongs to the ATPase gamma chain family. As to quaternary structure, F-type ATPases have 2 components, CF(1) - the catalytic core - and CF(0) - the membrane proton channel. CF(1) has five subunits: alpha(3), beta(3), gamma(1), delta(1), epsilon(1). CF(0) has three main subunits: a, b and c.

It localises to the cell inner membrane. Produces ATP from ADP in the presence of a proton gradient across the membrane. The gamma chain is believed to be important in regulating ATPase activity and the flow of protons through the CF(0) complex. The polypeptide is ATP synthase gamma chain (Actinobacillus pleuropneumoniae serotype 3 (strain JL03)).